The primary structure comprises 338 residues: MIGMGIETSCDETSIGIIRDGKELLSLGIFSQIDLHKPYGGIVPEIASRAHLEKINLLLEETMEEAKIRFEDLSYVAVTSSPGLTGSLMVGAQMARCINMVYETPILPVCHLQSHFAVLHLEGVPTEFPVLGLLLSGGNSAVYILQEFGRMELVGDTMDDALGEAFDKVAGLLDLPYPGGPHIEAKANEYIPTPDEKPILPLLLRNLPQGEVSFSFSGLKTAVMVLLEKQKEVSKEQICWNFQNSAFDLVERNLKRAVAKTGIRKVFAAGGVLANTTLQKRLEVWAGKNSVELFTPKKKIYCTDNGAMVASLGYHLFRKGYKKGVDFTVNPSRQEIFS.

The Fe cation site is built by His-111 and His-115. Substrate contacts are provided by residues 134-138 (LLSGG), Asp-167, Gly-180, and Asn-275. Fe cation is bound at residue Asp-304.

This sequence belongs to the KAE1 / TsaD family. Requires Fe(2+) as cofactor.

The protein resides in the cytoplasm. It catalyses the reaction L-threonylcarbamoyladenylate + adenosine(37) in tRNA = N(6)-L-threonylcarbamoyladenosine(37) in tRNA + AMP + H(+). Functionally, required for the formation of a threonylcarbamoyl group on adenosine at position 37 (t(6)A37) in tRNAs that read codons beginning with adenine. Is involved in the transfer of the threonylcarbamoyl moiety of threonylcarbamoyl-AMP (TC-AMP) to the N6 group of A37, together with TsaE and TsaB. TsaD likely plays a direct catalytic role in this reaction. The protein is tRNA N6-adenosine threonylcarbamoyltransferase of Leptospira borgpetersenii serovar Hardjo-bovis (strain JB197).